The sequence spans 377 residues: Aspartate aminotransferase (377 aa).

G37, W123, and N173 together coordinate L-aspartate. Position 234 is an N6-(pyridoxal phosphate)lysine (K234). R353 is a binding site for L-aspartate.

This sequence belongs to the class-I pyridoxal-phosphate-dependent aminotransferase family. In terms of assembly, homodimer. The cofactor is pyridoxal 5'-phosphate.

It localises to the cytoplasm. The catalysed reaction is L-aspartate + 2-oxoglutarate = oxaloacetate + L-glutamate. The polypeptide is Aspartate aminotransferase (aspC) (Thermotoga maritima (strain ATCC 43589 / DSM 3109 / JCM 10099 / NBRC 100826 / MSB8)).